Reading from the N-terminus, the 174-residue chain is NAD(P)H-quinone oxidoreductase subunit J, chloroplastic (174 aa).

This sequence belongs to the complex I 30 kDa subunit family. As to quaternary structure, NDH is composed of at least 16 different subunits, 5 of which are encoded in the nucleus.

The protein localises to the plastid. The protein resides in the chloroplast thylakoid membrane. It catalyses the reaction a plastoquinone + NADH + (n+1) H(+)(in) = a plastoquinol + NAD(+) + n H(+)(out). The enzyme catalyses a plastoquinone + NADPH + (n+1) H(+)(in) = a plastoquinol + NADP(+) + n H(+)(out). Its function is as follows. NDH shuttles electrons from NAD(P)H:plastoquinone, via FMN and iron-sulfur (Fe-S) centers, to quinones in the photosynthetic chain and possibly in a chloroplast respiratory chain. The immediate electron acceptor for the enzyme in this species is believed to be plastoquinone. Couples the redox reaction to proton translocation, and thus conserves the redox energy in a proton gradient. The sequence is that of NAD(P)H-quinone oxidoreductase subunit J, chloroplastic from Mesostigma viride (Green alga).